The chain runs to 430 residues: Adenylosuccinate synthetase (430 aa).

GTP-binding positions include 17-23 (GDEGKGK) and 45-47 (GHT). Asp-18 (proton acceptor) is an active-site residue. Residues Asp-18 and Gly-45 each coordinate Mg(2+). IMP-binding positions include 18–21 (DEGK), 43–46 (NAGH), Thr-139, Arg-153, Asn-229, Thr-244, and Arg-308. The Proton donor role is filled by His-46. 304-310 (TVTGRRR) is a substrate binding site. Residues Arg-310, 336–338 (KLD), and 418–420 (GVG) contribute to the GTP site.

This sequence belongs to the adenylosuccinate synthetase family. Homodimer. It depends on Mg(2+) as a cofactor.

It localises to the cytoplasm. It carries out the reaction IMP + L-aspartate + GTP = N(6)-(1,2-dicarboxyethyl)-AMP + GDP + phosphate + 2 H(+). Its pathway is purine metabolism; AMP biosynthesis via de novo pathway; AMP from IMP: step 1/2. Plays an important role in the de novo pathway and in the salvage pathway of purine nucleotide biosynthesis. Catalyzes the first committed step in the biosynthesis of AMP from IMP. The sequence is that of Adenylosuccinate synthetase from Cryptococcus neoformans var. neoformans serotype D (strain JEC21 / ATCC MYA-565) (Filobasidiella neoformans).